The primary structure comprises 205 residues: NADH-ubiquinone oxidoreductase chain 6 (205 aa).

The next 3 membrane-spanning stretches (helical) occupy residues 48–68, 86–106, and 150–170; these read FFAM…FLFV, YLPV…FILD, and VWFL…IVLT.

This sequence belongs to the complex I subunit 6 family. In terms of assembly, complex I is composed of at least 49 different subunits.

Its subcellular location is the mitochondrion membrane. It catalyses the reaction a ubiquinone + NADH + 5 H(+)(in) = a ubiquinol + NAD(+) + 4 H(+)(out). Functionally, core subunit of the mitochondrial membrane respiratory chain NADH dehydrogenase (Complex I) that is believed to belong to the minimal assembly required for catalysis. Complex I functions in the transfer of electrons from NADH to the respiratory chain. The immediate electron acceptor for the enzyme is believed to be ubiquinone. The chain is NADH-ubiquinone oxidoreductase chain 6 (ND6) from Arabidopsis thaliana (Mouse-ear cress).